The following is a 217-amino-acid chain: 3,4-dihydroxy-2-butanone 4-phosphate synthase (217 aa).

Residues Arg-37–Glu-38, Asp-42, Arg-150–Thr-154, and Glu-174 each bind D-ribulose 5-phosphate. Mg(2+) is bound at residue Glu-38. His-153 is a binding site for Mg(2+).

It belongs to the DHBP synthase family. Homodimer. Mg(2+) is required as a cofactor. Requires Mn(2+) as cofactor.

It catalyses the reaction D-ribulose 5-phosphate = (2S)-2-hydroxy-3-oxobutyl phosphate + formate + H(+). The protein operates within cofactor biosynthesis; riboflavin biosynthesis; 2-hydroxy-3-oxobutyl phosphate from D-ribulose 5-phosphate: step 1/1. Catalyzes the conversion of D-ribulose 5-phosphate to formate and 3,4-dihydroxy-2-butanone 4-phosphate. This chain is 3,4-dihydroxy-2-butanone 4-phosphate synthase, found in Shewanella oneidensis (strain ATCC 700550 / JCM 31522 / CIP 106686 / LMG 19005 / NCIMB 14063 / MR-1).